The sequence spans 99 residues: MALDLSDVKRIAHLARIETSDDEAAQTLAQLNNFFSLVEQMQAVDTTGIEPQAHPLSAVRDMVQRLREDVVTETDRRADYQRPAPATENGLYLVPKVIE.

The protein belongs to the GatC family. As to quaternary structure, heterotrimer of A, B and C subunits.

The enzyme catalyses L-glutamyl-tRNA(Gln) + L-glutamine + ATP + H2O = L-glutaminyl-tRNA(Gln) + L-glutamate + ADP + phosphate + H(+). The catalysed reaction is L-aspartyl-tRNA(Asn) + L-glutamine + ATP + H2O = L-asparaginyl-tRNA(Asn) + L-glutamate + ADP + phosphate + 2 H(+). Allows the formation of correctly charged Asn-tRNA(Asn) or Gln-tRNA(Gln) through the transamidation of misacylated Asp-tRNA(Asn) or Glu-tRNA(Gln) in organisms which lack either or both of asparaginyl-tRNA or glutaminyl-tRNA synthetases. The reaction takes place in the presence of glutamine and ATP through an activated phospho-Asp-tRNA(Asn) or phospho-Glu-tRNA(Gln). The protein is Aspartyl/glutamyl-tRNA(Asn/Gln) amidotransferase subunit C of Cupriavidus taiwanensis (strain DSM 17343 / BCRC 17206 / CCUG 44338 / CIP 107171 / LMG 19424 / R1) (Ralstonia taiwanensis (strain LMG 19424)).